A 133-amino-acid polypeptide reads, in one-letter code: ATP synthase epsilon chain (133 aa).

This sequence belongs to the ATPase epsilon chain family. As to quaternary structure, F-type ATPases have 2 components, CF(1) - the catalytic core - and CF(0) - the membrane proton channel. CF(1) has five subunits: alpha(3), beta(3), gamma(1), delta(1), epsilon(1). CF(0) has three main subunits: a, b and c.

The protein localises to the cell membrane. In terms of biological role, produces ATP from ADP in the presence of a proton gradient across the membrane. This is ATP synthase epsilon chain from Bacillus cytotoxicus (strain DSM 22905 / CIP 110041 / 391-98 / NVH 391-98).